The sequence spans 309 residues: D-alanine--D-alanine ligase (309 aa).

In terms of domain architecture, ATP-grasp spans 104-301 (KQIWQGSDLP…FDALCVEILA (198 aa)). 130-185 (VASLGLPVIIKPVHEGSSIGMSKVEKIEDFAPAIEKATAHDAIVMAEKWITGREYT) is an ATP binding site. 3 residues coordinate Mg(2+): Asp255, Glu268, and Asn270.

The protein belongs to the D-alanine--D-alanine ligase family. Requires Mg(2+) as cofactor. Mn(2+) is required as a cofactor.

The protein resides in the cytoplasm. The catalysed reaction is 2 D-alanine + ATP = D-alanyl-D-alanine + ADP + phosphate + H(+). It functions in the pathway cell wall biogenesis; peptidoglycan biosynthesis. Functionally, cell wall formation. The chain is D-alanine--D-alanine ligase from Acinetobacter baylyi (strain ATCC 33305 / BD413 / ADP1).